Here is a 76-residue protein sequence, read N- to C-terminus: MKLTCMMIVAVLFLTAWTFATADDSSNGLGNLFLKAHHEMKNPEASKLNERCLDAGEVCDIFFPTCCGYCILLFCA.

The N-terminal stretch at 1 to 22 is a signal peptide; that stretch reads MKLTCMMIVAVLFLTAWTFATA. Positions 23–51 are excised as a propeptide; that stretch reads DDSSNGLGNLFLKAHHEMKNPEASKLNER. Cystine bridges form between Cys-52–Cys-67, Cys-59–Cys-70, and Cys-66–Cys-75.

This sequence belongs to the conotoxin O1 superfamily. Expressed by the venom duct.

Its subcellular location is the secreted. Its function is as follows. Omega-conotoxins act at presynaptic membranes, they bind and block voltage-gated calcium channels (Cav). In Conus textile (Cloth-of-gold cone), this protein is Omega-conotoxin-like TeA61.